The chain runs to 591 residues: Glutathione hydrolase (591 aa).

An N-terminal signal peptide occupies residues 1-41 (MASKWIEEQPLVHRRDIRISSKSRIAAGLLVLLVLWRYGLP). Arg-122 is an L-glutamate binding site. 3 N-linked (GlcNAc...) asparagine glycosylation sites follow: Asn-135, Asn-270, and Asn-389. Thr-393 acts as the Nucleophile in catalysis. Residues Thr-411, Glu-432, and 464 to 465 (SA) contribute to the L-glutamate site. Asn-534 carries N-linked (GlcNAc...) asparagine glycosylation.

This sequence belongs to the gamma-glutamyltransferase family.

The catalysed reaction is an N-terminal (5-L-glutamyl)-[peptide] + an alpha-amino acid = 5-L-glutamyl amino acid + an N-terminal L-alpha-aminoacyl-[peptide]. It carries out the reaction glutathione + H2O = L-cysteinylglycine + L-glutamate. It catalyses the reaction an S-substituted glutathione + H2O = an S-substituted L-cysteinylglycine + L-glutamate. It participates in mycotoxin biosynthesis. In terms of biological role, gamma-glutamyltransferase; part of the gene cluster that mediates the biosynthesis of the secondary metabolite ustiloxin B, an antimitotic tetrapeptide. First, ustA is processed by the subtilisin-like endoprotease Kex2 that is outside the ustiloxin B gene cluster, at the C-terminal side of Arg-Lys, after transfer to Golgi apparatus through the endoplasmic reticulum (ER). Cleavage by KEX2 generates 16 peptides YAIG-I to YAIG-XVI. To process the precursor peptide further, at least two peptidases are necessary to cleave the N-terminal and C-terminal sides of the Tyr-Ala-Ile-Gly core peptide which serves as backbone for the synthesis of ustiloxin B, through cyclization and modification of the tyrosine with a non-protein coding amino acid, norvaline. One of the two peptidases must be the serine peptidase ustP; and the other pepdidase is probably ustH. Macrocyclization of the core peptide derived from ustA requires the tyrosinase ustQ, as well as the homologous oxidases ustYa and ustYb, and leads to the production of the first cyclization product N-desmethylustiloxin F. For the formation of N-desmethylustiloxin F, three oxidation steps are required, hydroxylation at the benzylic position, hydroxylation at either the aromatic ring of Tyr or beta-position of Ile, and oxidative cyclization. UstQ may catalyze the oxidation of a phenol moiety, whereas the ustYa and ustYb are most likely responsible for the remaining two-step oxidations. N-desmethylustiloxin F is then methylated by ustM to yield ustiloxin F which in turn substrate of the cytochrome P450 monooxygenase ustC which catalyzes the formation of S-deoxyustiloxin H. The flavoprotein monooxygenases ustF1 and ustF2 then participate in the modification of the side chain of S-deoxyustiloxin H, leading to the synthesis of an oxime intermediate, via ustiloxin H. Finally, carboxylative dehydration performed by the cysteine desulfurase-like protein ustD yields ustiloxin B. This Aspergillus flavus (strain ATCC 200026 / FGSC A1120 / IAM 13836 / NRRL 3357 / JCM 12722 / SRRC 167) protein is Glutathione hydrolase.